Reading from the N-terminus, the 133-residue chain is Interferon alpha-inducible protein 27-like protein 2 (133 aa).

3 consecutive transmembrane segments (helical) span residues 8–28 (AAIGGALAVAAVPAVLGAVGF), 51–71 (GGGVAAGSLVATLQSVGAAGL), and 73–93 (TSSNILLGSIGSAFGALLGGA). Residues 93-133 (AKRASPSPPPGGPRPEGEQPGENVPQVEPPKSPLGPEKHEK) are disordered.

The protein belongs to the IFI6/IFI27 family.

It is found in the mitochondrion membrane. Functionally, plays a role in the apoptotic process and has a pro-apoptotic activity. This Bos taurus (Bovine) protein is Interferon alpha-inducible protein 27-like protein 2.